A 158-amino-acid polypeptide reads, in one-letter code: MRVGIGYDVHKLVDGRDLIIGGEKIPFEKGLLGHSDADVLCHAIGDSILGAAALGDIGRHFPDTDNRYKGYSSLKLLEEIKRIINEKGYYITNIDSTIIAQKPKMLAYINNMRKNISKVLDISIEDINIKATTEEELGFTGKQLGIKAQSICLLNKNI.

D8 and H10 together coordinate a divalent metal cation. Residues 8-10 (DVH) and 34-35 (HS) each bind 4-CDP-2-C-methyl-D-erythritol 2-phosphate. A divalent metal cation is bound at residue H42. 4-CDP-2-C-methyl-D-erythritol 2-phosphate is bound by residues 56 to 58 (DIG), 61 to 65 (FPDTD), 100 to 106 (AQKPKML), 132 to 135 (TTEE), F139, and K142.

This sequence belongs to the IspF family. As to quaternary structure, homotrimer. It depends on a divalent metal cation as a cofactor.

The enzyme catalyses 4-CDP-2-C-methyl-D-erythritol 2-phosphate = 2-C-methyl-D-erythritol 2,4-cyclic diphosphate + CMP. Its pathway is isoprenoid biosynthesis; isopentenyl diphosphate biosynthesis via DXP pathway; isopentenyl diphosphate from 1-deoxy-D-xylulose 5-phosphate: step 4/6. Involved in the biosynthesis of isopentenyl diphosphate (IPP) and dimethylallyl diphosphate (DMAPP), two major building blocks of isoprenoid compounds. Catalyzes the conversion of 4-diphosphocytidyl-2-C-methyl-D-erythritol 2-phosphate (CDP-ME2P) to 2-C-methyl-D-erythritol 2,4-cyclodiphosphate (ME-CPP) with a corresponding release of cytidine 5-monophosphate (CMP). The protein is 2-C-methyl-D-erythritol 2,4-cyclodiphosphate synthase of Clostridium tetani (strain Massachusetts / E88).